The primary structure comprises 1500 residues: DNA-directed RNA polymerase subunit beta' (1500 aa).

Zn(2+)-binding residues include Cys60, Cys62, Cys75, and Cys78. Residues 180 to 199 (DLGGMETAQRSTQRQIEEDY) are disordered. The Mg(2+) site is built by Asp626, Asp628, and Asp630. Positions 1002, 1075, 1082, and 1085 each coordinate Zn(2+). The interval 1440–1500 (EVQQAEKSAE…DSDHPDLSSL (61 aa)) is disordered. Over residues 1449-1468 (EPTTTALPTTNGHQAPQSDT) the composition is skewed to polar residues.

Belongs to the RNA polymerase beta' chain family. As to quaternary structure, the RNAP catalytic core consists of 2 alpha, 1 beta, 1 beta' and 1 omega subunit. When a sigma factor is associated with the core the holoenzyme is formed, which can initiate transcription. Requires Mg(2+) as cofactor. Zn(2+) serves as cofactor.

The enzyme catalyses RNA(n) + a ribonucleoside 5'-triphosphate = RNA(n+1) + diphosphate. Functionally, DNA-dependent RNA polymerase catalyzes the transcription of DNA into RNA using the four ribonucleoside triphosphates as substrates. The sequence is that of DNA-directed RNA polymerase subunit beta' from Chloroflexus aggregans (strain MD-66 / DSM 9485).